Reading from the N-terminus, the 404-residue chain is Pyruvate-flavodoxin oxidoreductase (404 aa).

Belongs to the pyruvate:ferredoxin/flavodoxin oxidoreductase family.

The enzyme catalyses oxidized [flavodoxin] + pyruvate + CoA + 2 H(+) = reduced [flavodoxin] + acetyl-CoA + CO2. Oxidoreductase required for the transfer of electrons from pyruvate to flavodoxin, which reduces nitrogenase. The protein is Pyruvate-flavodoxin oxidoreductase (nifJ) of Nostoc sp. (strain ATCC 29151 / PCC 7119) (Anabaena sp.).